A 146-amino-acid chain; its full sequence is Hemoglobin subunit beta (146 aa).

At Val1 the chain carries N-acetylvaline. The Globin domain maps to 2–146 (HLTAEEKDAV…VANALAHRYH (145 aa)). Residue Ser44 is modified to Phosphoserine. Residue Lys59 is modified to N6-acetyllysine. Residue His63 participates in heme b binding. The residue at position 82 (Lys82) is an N6-acetyllysine. Position 92 (His92) interacts with heme b. Cys93 carries the S-nitrosocysteine modification.

This sequence belongs to the globin family. Heterotetramer of two alpha chains and two beta chains. Red blood cells.

In terms of biological role, involved in oxygen transport from the lung to the various peripheral tissues. This Hippopotamus amphibius (Hippopotamus) protein is Hemoglobin subunit beta (HBB).